The primary structure comprises 335 residues: MHLRTLHFLILIGIFIGGQTLGCMKKVCGNNAKNDFRRCPDTDGSCGNYHTERTSGEIIDGVDVRCHLGEPIYAPIEGEMYFWRPYGGKREKSCADQGVRIEGTGQWQGYAVHISSVKLSFFGGHVEAGDEIGEALNRYCFNDRGQNDVEPHVEIRLYKEGRLIDPTHHLQNCMCTGQICESNTRNVLLGDPFKTDKRYNGVRGWDVECQMIDDDDEDSPRAPMIYSPIAGEIVGRIRLFTDSNGAYTGCDNDGIFIVGIDDWLGFEARLYNVKARADIGFGRKRIIQGEPIATRLACENSPDSVFVEIRFEGRVVNITDIITAANCKTPNFPVF.

The first 20 residues, 1 to 20 (MHLRTLHFLILIGIFIGGQT), serve as a signal peptide directing secretion. Cystine bridges form between C28–C66 and C39–C46. D63 serves as a coordination point for Zn(2+). An N-linked (GlcNAc...) asparagine glycan is attached at N317.

Belongs to the LECT2/MIM-1 family. Component of a multi-protein dma-1 receptor-ligand complex, which is activated upon binding of lect-2, mnr-1 and sax-7 ligands to promote the morphogenesis of dendrites which extend from the PVD neuronal body. Within the complex interacts with sax-7; the interaction is required for lect-2 dendritic localization and enhances the binding of the mnr-1 and sax-7 ligands to the dma-1 receptor-ligand complex. Expressed in body wall muscle cells, along the boundary of the lateral hypodermis, seam cells, processes of the nervous system including commissures, sensory dendrites in the head, and lateral nerve tracts, and motor neurons and some mechanosensory neurons such as ALM.

The protein localises to the secreted. The protein resides in the cell junction. Its subcellular location is the extracellular space. It is found in the extracellular matrix. It localises to the basement membrane. The protein localises to the cell projection. The protein resides in the dendrite. Its subcellular location is the perikaryon. It is found in the cell surface. Functionally, muscle-derived dendritic guidance cue, which is required for the formation of somatosensory dendritic arbors which extend from PVD and FLP sensory neurons during development. Ligand of a multi-protein dma-1 receptor-ligand complex, which is activated upon binding of lect-2, mnr-1 and sax-7 ligands to control the growth of dendrites that extend anteriorly from the PVD neuronal cell body. Enhances the binding of the mnr-1 and sax-7 ligands to the dma-1 receptor-ligand complex. Restricts the growth of secondary PVD dendritic branches and any irregularly positioned ectopic tertiary dendritic branches that originate from secondary branches, and promotes the formation of stable higher order dendritic branches. In particular, it is required for the formation of quaternary PVD dendritic branches and promotes their innervation of body wall muscles. Promotes self-avoidance of tertiary dendritic branches of PVD sensory neurons. Not required for the growth of dendrites that extend from AIY and PVQ interneurons, DVB GABergic neurons, PLM and ALM mechanosensory neurons, AFD sensory neurons and DD/VD and DA/DB motor neurons. This Caenorhabditis elegans protein is Leukocyte cell-derived chemotaxin-2 homolog.